We begin with the raw amino-acid sequence, 117 residues long: Ribosomal silencing factor RsfS (117 aa).

The protein belongs to the Iojap/RsfS family. As to quaternary structure, interacts with ribosomal protein uL14 (rplN).

The protein localises to the cytoplasm. Its function is as follows. Functions as a ribosomal silencing factor. Interacts with ribosomal protein uL14 (rplN), blocking formation of intersubunit bridge B8. Prevents association of the 30S and 50S ribosomal subunits and the formation of functional ribosomes, thus repressing translation. This is Ribosomal silencing factor RsfS from Halalkalibacterium halodurans (strain ATCC BAA-125 / DSM 18197 / FERM 7344 / JCM 9153 / C-125) (Bacillus halodurans).